Here is a 304-residue protein sequence, read N- to C-terminus: Ornithine carbamoyltransferase (304 aa).

Carbamoyl phosphate-binding positions include 47-50 (STRT), R98, and 125-128 (HPCQ). Residues N156, D221, and 225-226 (SM) each bind L-ornithine. Carbamoyl phosphate-binding positions include 262–263 (CL) and R290.

The protein belongs to the aspartate/ornithine carbamoyltransferase superfamily. OTCase family.

Its subcellular location is the cytoplasm. It carries out the reaction carbamoyl phosphate + L-ornithine = L-citrulline + phosphate + H(+). The protein operates within amino-acid biosynthesis; L-arginine biosynthesis; L-arginine from L-ornithine and carbamoyl phosphate: step 1/3. In terms of biological role, reversibly catalyzes the transfer of the carbamoyl group from carbamoyl phosphate (CP) to the N(epsilon) atom of ornithine (ORN) to produce L-citrulline. The protein is Ornithine carbamoyltransferase of Methanococcus maripaludis (strain C7 / ATCC BAA-1331).